A 554-amino-acid chain; its full sequence is Neutral amino acid transporter 9 (554 aa).

At 1 to 112 (MDSDQTPLIN…GSDGTGKNSS (112 aa)) the chain is on the cytoplasmic side. A helical membrane pass occupies residues 113–133 (IVTIFMIWNTMMGTSILSIPW). Residues 122-127 (TMMGTS) form an important for arginine binding and amino acid transport region. Ser-127 contacts arginine. Residues 134–139 (GIKQAG) lie on the Lumenal side of the membrane. The helical transmembrane segment at 140-160 (FTTGVCILFLMGILTLYCCYR) threads the bilayer. Residues 161-191 (VVKSRGTIPLTDTSNWEFPDVCQYYFGSFGR) lie on the Cytoplasmic side of the membrane. Residues 192 to 218 (WSSLLFSLVSLIGAMIVYWVLMSNFLF) form a helical membrane-spanning segment. The Lumenal segment spans residues 219–276 (NTGKFIYNYVNDVNVTDDVLSNNGSDKVICPNPDSTRPLNKSMDTYFGNGTNYEQFET). N-linked (GlcNAc...) asparagine glycans are attached at residues Asn-232, Asn-241, Asn-258, and Asn-267. A disulfide bridge connects residues Cys-248 and Cys-417. Residues 277–293 (WWSKTNTVPFYLVVLLL) form a helical membrane-spanning segment. The Cytoplasmic portion of the chain corresponds to 294-302 (PLLSFRSPS). The helical transmembrane segment at 303 to 327 (FFAKFNILGTVSIIYLVSLVTLKAA) threads the bilayer. Over 328–349 (HLGFHLRFSWNQVQEFFVPEFR) the chain is Lumenal. A helical transmembrane segment spans residues 350-370 (LSFPQLTGILTLAFFIHNCII). Residues 371–387 (TLLKNNRNQKNNVRDLS) lie on the Cytoplasmic side of the membrane. A helical transmembrane segment spans residues 388-408 (IAYLLVGLTYIYVGVAVFASF). At 409–430 (PSPPLSKQCIQQNFLDNFPSSD) the chain is on the lumenal side. A helical transmembrane segment spans residues 431 to 451 (ILAFVARIFLLFQMMTVYPLL). Positions 437 to 447 (RIFLLFQMMTV) match the CARC motif motif. A CRAC motif motif is present at residues 450–456 (LLGYLVR). At 452–472 (GYLVRVQLLGHIFGDIYPSVF) the chain is on the cytoplasmic side. The chain crosses the membrane as a helical span at residues 473–493 (HVLALNIAVVGVGVIMARFYP). Residues 494-500 (NIGGIIR) lie on the Lumenal side of the membrane. Residues 501-521 (FSGAACGLAFVFVYPSLIHMI) traverse the membrane as a helical segment. At 522 to 533 (SLHRRGQLKVHS) the chain is on the cytoplasmic side. The chain crosses the membrane as a helical span at residues 534–554 (ILIHVSIIVLGIANLIAQFFM).

It belongs to the amino acid/polyamine transporter 2 family. SLC38A9 subfamily. In terms of assembly, associated component of the Ragulator complex. Associated component of the Rag GTPases heterodimers. Post-translationally, glycosylated.

It is found in the lysosome membrane. The protein localises to the late endosome membrane. The catalysed reaction is L-leucine(in) = L-leucine(out). The enzyme catalyses L-tyrosine(in) = L-tyrosine(out). It catalyses the reaction L-glutamine(out) = L-glutamine(in). It carries out the reaction L-asparagine(out) = L-asparagine(in). Functionally, lysosomal amino acid transporter involved in the activation of mTORC1 in response to amino acid levels. Probably acts as an amino acid sensor of the Rag GTPases and Ragulator complexes, 2 complexes involved in amino acid sensing and activation of mTORC1, a signaling complex promoting cell growth in response to growth factors, energy levels, and amino acids. Following activation by amino acids, the Ragulator and Rag GTPases function as a scaffold recruiting mTORC1 to lysosomes where it is in turn activated. SLC38A9 mediates transport of amino acids with low capacity and specificity with a slight preference for polar amino acids. Acts as an arginine sensor. Following activation by arginine binding, mediates transport of L-glutamine, leucine and tyrosine with high efficiency, and is required for the efficient utilization of these amino acids after lysosomal protein degradation. However, the transport mechanism is not well defined and the role of sodium is not clear. Guanine exchange factor (GEF) that, upon arginine binding, stimulates GDP release from RRAGA and therefore activates the Rag GTPase heterodimer and the mTORC1 pathway in response to nutrient sufficiency. The protein is Neutral amino acid transporter 9 of Xenopus tropicalis (Western clawed frog).